Reading from the N-terminus, the 156-residue chain is 6,7-dimethyl-8-ribityllumazine synthase (156 aa).

5-amino-6-(D-ribitylamino)uracil contacts are provided by residues Phe22, 57-59, and 81-83; these read AYE and TVI. Position 86–87 (86–87) interacts with (2S)-2-hydroxy-3-oxobutyl phosphate; sequence GT. His89 serves as the catalytic Proton donor. Phe114 contacts 5-amino-6-(D-ribitylamino)uracil. A (2S)-2-hydroxy-3-oxobutyl phosphate-binding site is contributed by Arg128.

The protein belongs to the DMRL synthase family. As to quaternary structure, forms an icosahedral capsid composed of 60 subunits, arranged as a dodecamer of pentamers.

It catalyses the reaction (2S)-2-hydroxy-3-oxobutyl phosphate + 5-amino-6-(D-ribitylamino)uracil = 6,7-dimethyl-8-(1-D-ribityl)lumazine + phosphate + 2 H2O + H(+). Its pathway is cofactor biosynthesis; riboflavin biosynthesis; riboflavin from 2-hydroxy-3-oxobutyl phosphate and 5-amino-6-(D-ribitylamino)uracil: step 1/2. Catalyzes the formation of 6,7-dimethyl-8-ribityllumazine by condensation of 5-amino-6-(D-ribitylamino)uracil with 3,4-dihydroxy-2-butanone 4-phosphate. This is the penultimate step in the biosynthesis of riboflavin. The protein is 6,7-dimethyl-8-ribityllumazine synthase of Sodalis glossinidius (strain morsitans).